We begin with the raw amino-acid sequence, 75 residues long: DNA-directed RNA polymerase subunit Rpo5 (75 aa).

The protein belongs to the archaeal Rpo5/eukaryotic RPB5 RNA polymerase subunit family. As to quaternary structure, part of the RNA polymerase complex.

The protein localises to the cytoplasm. It catalyses the reaction RNA(n) + a ribonucleoside 5'-triphosphate = RNA(n+1) + diphosphate. Its function is as follows. DNA-dependent RNA polymerase (RNAP) catalyzes the transcription of DNA into RNA using the four ribonucleoside triphosphates as substrates. The polypeptide is DNA-directed RNA polymerase subunit Rpo5 (Pyrobaculum aerophilum (strain ATCC 51768 / DSM 7523 / JCM 9630 / CIP 104966 / NBRC 100827 / IM2)).